Consider the following 156-residue polypeptide: Endoribonuclease YbeY (156 aa).

3 residues coordinate Zn(2+): His122, His126, and His132.

It belongs to the endoribonuclease YbeY family. The cofactor is Zn(2+).

It localises to the cytoplasm. Its function is as follows. Single strand-specific metallo-endoribonuclease involved in late-stage 70S ribosome quality control and in maturation of the 3' terminus of the 16S rRNA. This is Endoribonuclease YbeY from Symbiobacterium thermophilum (strain DSM 24528 / JCM 14929 / IAM 14863 / T).